Consider the following 793-residue polypeptide: Putative dipeptidyl aminopeptidase C2E11.08 (793 aa).

Topologically, residues 1-24 are cytoplasmic; the sequence is MNDFSFEDKGLISRSGFGSRHVRR. Residues 25-45 traverse the membrane as a helical; Signal-anchor for type II membrane protein segment; that stretch reads VVKALALIFSLLILYLTISNV. Topologically, residues 46–793 are lumenal; sequence SDSPPKRDSL…STGVRQHRWD (748 aa). 11 N-linked (GlcNAc...) asparagine glycosylation sites follow: asparagine 101, asparagine 136, asparagine 246, asparagine 299, asparagine 303, asparagine 324, asparagine 336, asparagine 377, asparagine 384, asparagine 407, and asparagine 535. Active-site charge relay system residues include serine 647, aspartate 722, and histidine 755. Asparagine 761 carries N-linked (GlcNAc...) asparagine glycosylation.

This sequence belongs to the peptidase S9B family.

The protein resides in the vacuole membrane. The polypeptide is Putative dipeptidyl aminopeptidase C2E11.08 (Schizosaccharomyces pombe (strain 972 / ATCC 24843) (Fission yeast)).